A 344-amino-acid polypeptide reads, in one-letter code: Gibberellin receptor GID1C (344 aa).

A2 bears the N-acetylalanine mark. Residues 111–113 (HGG) carry the Involved in the stabilization of the negatively charged intermediate by the formation of the oxyanion hole motif. Residues 113–114 (GS), Y125, and S189 contribute to the gibberellin A4 site. Positions 114, 125, 189, and 236 each coordinate gibberellin A3. The active site involves S189. Residue D287 is part of the active site. G318 serves as a coordination point for gibberellin A4. G318 is a gibberellin A3 binding site.

It belongs to the 'GDXG' lipolytic enzyme family. Interacts with the DELLA proteins GAI, RGA, RGL1, RGL2 and RGL3 in a GA-dependent manner. As to expression, widely expressed.

It is found in the nucleus. Functionally, functions as a soluble gibberellin (GA) receptor. GA is an essential hormone that regulates growth and development in plants. Binds with high affinity the biologically active gibberellin GA4, but has no affinity for the biologically inactive GAs. In response to GA, interacts with specific DELLA proteins, known as repressors of GA-induced growth, and targets them for degradation via proteasome. Seems to be required for GA signaling that controls root growth, seed germination and stem elongation. Partially redundant with GID1A and GID1B. The protein is Gibberellin receptor GID1C (GID1C) of Arabidopsis thaliana (Mouse-ear cress).